The sequence spans 510 residues: Probable cytochrome P450 312a1 (510 aa).

Cys455 contacts heme.

The protein belongs to the cytochrome P450 family. Heme serves as cofactor.

The protein localises to the endoplasmic reticulum membrane. Its subcellular location is the microsome membrane. In terms of biological role, may be involved in the metabolism of insect hormones and in the breakdown of synthetic insecticides. This Drosophila melanogaster (Fruit fly) protein is Probable cytochrome P450 312a1 (Cyp312a1).